A 204-amino-acid polypeptide reads, in one-letter code: Ribosomal RNA small subunit methyltransferase G (204 aa).

S-adenosyl-L-methionine-binding positions include G69, F74, 123 to 124 (IE), and R137.

It belongs to the methyltransferase superfamily. RNA methyltransferase RsmG family.

It localises to the cytoplasm. It carries out the reaction guanosine(527) in 16S rRNA + S-adenosyl-L-methionine = N(7)-methylguanosine(527) in 16S rRNA + S-adenosyl-L-homocysteine. Functionally, specifically methylates the N7 position of guanine in position 527 of 16S rRNA. The chain is Ribosomal RNA small subunit methyltransferase G from Ruegeria pomeroyi (strain ATCC 700808 / DSM 15171 / DSS-3) (Silicibacter pomeroyi).